Reading from the N-terminus, the 403-residue chain is Tyrosine--tRNA ligase (403 aa).

The short motif at 42 to 51 (PTAPDLHLGH) is the 'HIGH' region element. The short motif at 226-230 (KMSKS) is the 'KMSKS' region element. Lys229 is an ATP binding site. The S4 RNA-binding domain occupies 336-396 (MPISAVLNKA…GKKAFGRVTL (61 aa)).

The protein belongs to the class-I aminoacyl-tRNA synthetase family. TyrS type 2 subfamily. As to quaternary structure, homodimer.

It localises to the cytoplasm. It carries out the reaction tRNA(Tyr) + L-tyrosine + ATP = L-tyrosyl-tRNA(Tyr) + AMP + diphosphate + H(+). Its function is as follows. Catalyzes the attachment of tyrosine to tRNA(Tyr) in a two-step reaction: tyrosine is first activated by ATP to form Tyr-AMP and then transferred to the acceptor end of tRNA(Tyr). In Pseudomonas syringae pv. syringae (strain B728a), this protein is Tyrosine--tRNA ligase.